Consider the following 706-residue polypeptide: SPX domain-containing membrane protein OsI_32082 (706 aa).

An SPX domain is found at Val2–Arg145. 6 consecutive transmembrane segments (helical) span residues Met251–Val271, Leu281–Phe301, Leu318–Leu338, Ser340–Val359, Ala378–Leu398, and Leu414–Phe434. Residues Ser475–Thr498 form a disordered region. A compositionally biased stretch (acidic residues) spans Glu476–His488. The next 5 membrane-spanning stretches (helical) occupy residues Leu520 to Val540, Val554 to Ile574, Ile583 to Val603, Val611 to Leu631, and Leu678 to Leu698.

This sequence belongs to the major facilitator superfamily.

Its subcellular location is the membrane. The polypeptide is SPX domain-containing membrane protein OsI_32082 (Oryza sativa subsp. indica (Rice)).